Reading from the N-terminus, the 353-residue chain is S-adenosylmethionine:tRNA ribosyltransferase-isomerase (353 aa).

It belongs to the QueA family. In terms of assembly, monomer.

The protein resides in the cytoplasm. It catalyses the reaction 7-aminomethyl-7-carbaguanosine(34) in tRNA + S-adenosyl-L-methionine = epoxyqueuosine(34) in tRNA + adenine + L-methionine + 2 H(+). Its pathway is tRNA modification; tRNA-queuosine biosynthesis. In terms of biological role, transfers and isomerizes the ribose moiety from AdoMet to the 7-aminomethyl group of 7-deazaguanine (preQ1-tRNA) to give epoxyqueuosine (oQ-tRNA). The polypeptide is S-adenosylmethionine:tRNA ribosyltransferase-isomerase (Maricaulis maris (strain MCS10) (Caulobacter maris)).